Consider the following 65-residue polypeptide: Large ribosomal subunit protein bL35 (65 aa).

Belongs to the bacterial ribosomal protein bL35 family.

The polypeptide is Large ribosomal subunit protein bL35 (Xanthomonas campestris pv. campestris (strain ATCC 33913 / DSM 3586 / NCPPB 528 / LMG 568 / P 25)).